The primary structure comprises 220 residues: Ribosomal RNA small subunit methyltransferase J (220 aa).

S-adenosyl-L-methionine contacts are provided by residues 55 to 56 (RD), 71 to 72 (ER), and aspartate 123.

It belongs to the methyltransferase superfamily. RsmJ family.

The protein resides in the cytoplasm. It carries out the reaction guanosine(1516) in 16S rRNA + S-adenosyl-L-methionine = N(2)-methylguanosine(1516) in 16S rRNA + S-adenosyl-L-homocysteine + H(+). Its function is as follows. Specifically methylates the guanosine in position 1516 of 16S rRNA. The chain is Ribosomal RNA small subunit methyltransferase J from Rhodopseudomonas palustris (strain BisB5).